Reading from the N-terminus, the 1177-residue chain is Phospholipid-transporting ATPase IF (1177 aa).

Residues 1 to 55 (MWRWIRQQLGFDPPHQSDTRTIYVANRFPQNGLYTPQKFIDNRIISSKYTVWNFV) are Cytoplasmic-facing. A helical transmembrane segment spans residues 56–77 (PKNLFEQFRRVANFYFLIIFLV). At 78 to 82 (QLMID) the chain is on the extracellular side. A helical membrane pass occupies residues 83 to 104 (TPTSPVTSGLPLFFVITVTAIK). The Cytoplasmic segment spans residues 105–289 (QGYEDWLRHN…SAVEKSMNTF (185 aa)). The chain crosses the membrane as a helical span at residues 290–311 (LIIYLVILISEAVISTILKYTW). The Extracellular segment spans residues 312–341 (QAEEKWDEPWYNQKTEHQRNSSKILRFISD). Residues 342 to 359 (FLAFLVLYNFIIPISLYV) traverse the membrane as a helical segment. Over 360–876 (TVEMQKFLGS…HGHFYYIRIA (517 aa)) the chain is Cytoplasmic. The active-site 4-aspartylphosphate intermediate is D407. ATP-binding residues include D407, K408, T409, E531, F572, K595, R626, T706, G707, D708, R794, and K800. Mg(2+) is bound at residue D407. A Mg(2+)-binding site is contributed by T409. Mg(2+) is bound at residue D821. ATP is bound by residues N824 and D825. Position 825 (D825) interacts with Mg(2+). The helical transmembrane segment at 877-898 (TLVQYFFYKNVCFITPQFLYQF) threads the bilayer. Residues 899-910 (YCLFSQQTLYDS) lie on the Extracellular side of the membrane. A helical membrane pass occupies residues 911–930 (VYLTLYNICFTSLPILIYSL). At 931–960 (LEQHVDPHVLQNKPTLYRDISKNRLLSIKT) the chain is on the cytoplasmic side. A helical transmembrane segment spans residues 961–982 (FLYWTILGFSHAFIFFFGSYLL). Residues 983–997 (IGKDTSLLGNGQMFG) are Extracellular-facing. A helical membrane pass occupies residues 998 to 1020 (NWTFGTLVFTVMVITVTVKMALE). Residues 1021 to 1025 (THFWT) lie on the Cytoplasmic side of the membrane. The helical transmembrane segment at 1026-1047 (WINHLVTWGSIIFYFVFSLFYG) threads the bilayer. Topologically, residues 1048–1065 (GILWPFLGSQNMYFVFIQ) are extracellular. A helical membrane pass occupies residues 1066–1090 (LLSSGSAWFAIILMVVTCLFLDIIK). The Cytoplasmic segment spans residues 1091 to 1177 (KVFDRHLHPT…TLSTMDSSTC (87 aa)). S1154 carries the phosphoserine modification.

Belongs to the cation transport ATPase (P-type) (TC 3.A.3) family. Type IV subfamily. As to quaternary structure, component of a P4-ATPase flippase complex which consists of a catalytic alpha subunit ATP11B and an accessory beta subunit TMEM30A. The cofactor is Mg(2+).

It is found in the recycling endosome membrane. It localises to the early endosome. The protein resides in the endoplasmic reticulum. Its subcellular location is the golgi apparatus. The protein localises to the trans-Golgi network. It catalyses the reaction ATP + H2O + phospholipidSide 1 = ADP + phosphate + phospholipidSide 2.. It carries out the reaction a 1,2-diacyl-sn-glycero-3-phospho-L-serine(out) + ATP + H2O = a 1,2-diacyl-sn-glycero-3-phospho-L-serine(in) + ADP + phosphate + H(+). The enzyme catalyses a 1,2-diacyl-sn-glycero-3-phosphoethanolamine(out) + ATP + H2O = a 1,2-diacyl-sn-glycero-3-phosphoethanolamine(in) + ADP + phosphate + H(+). The ATPase activity is up-regulated by aminophospholipids PS and PE. Catalytic component of a P4-ATPase flippase complex which catalyzes the hydrolysis of ATP coupled to the transport of aminophospholipids, phosphatidylserines (PS) and phosphatidylethanolamines (PE), from the outer to the inner leaflet of intracellular membranes. May contribute to the maintenance of membrane lipid asymmetry in endosome compartment. The sequence is that of Phospholipid-transporting ATPase IF (ATP11B) from Homo sapiens (Human).